We begin with the raw amino-acid sequence, 281 residues long: 3-deoxy-manno-octulosonate cytidylyltransferase (281 aa).

The protein belongs to the KdsB family.

The protein localises to the cytoplasm. It carries out the reaction 3-deoxy-alpha-D-manno-oct-2-ulosonate + CTP = CMP-3-deoxy-beta-D-manno-octulosonate + diphosphate. Its pathway is nucleotide-sugar biosynthesis; CMP-3-deoxy-D-manno-octulosonate biosynthesis; CMP-3-deoxy-D-manno-octulosonate from 3-deoxy-D-manno-octulosonate and CTP: step 1/1. It participates in bacterial outer membrane biogenesis; lipopolysaccharide biosynthesis. Activates KDO (a required 8-carbon sugar) for incorporation into bacterial lipopolysaccharide in Gram-negative bacteria. The chain is 3-deoxy-manno-octulosonate cytidylyltransferase from Xanthomonas campestris pv. campestris (strain B100).